The chain runs to 258 residues: Glutamate racemase (258 aa).

Residues 11-12 (DS) and 43-44 (YG) contribute to the substrate site. C74 functions as the Proton donor/acceptor in the catalytic mechanism. Position 75–76 (75–76 (NT)) interacts with substrate. C182 serves as the catalytic Proton donor/acceptor. Residue 183-184 (TH) coordinates substrate.

The protein belongs to the aspartate/glutamate racemases family.

It catalyses the reaction L-glutamate = D-glutamate. It functions in the pathway cell wall biogenesis; peptidoglycan biosynthesis. In terms of biological role, provides the (R)-glutamate required for cell wall biosynthesis. The sequence is that of Glutamate racemase from Leptospira borgpetersenii serovar Hardjo-bovis (strain JB197).